The following is a 234-amino-acid chain: Synaptogyrin-4 (234 aa).

The 152-residue stretch at 18–169 (FLRRPKTITR…QAYLAFQDLR (152 aa)) folds into the MARVEL domain. The next 4 membrane-spanning stretches (helical) occupy residues 25-45 (ITRV…LTDG), 66-86 (CSFA…FLVL), 104-124 (LLDF…FCFL), and 145-165 (AAIA…YLAF).

It belongs to the synaptogyrin family.

The protein resides in the membrane. The sequence is that of Synaptogyrin-4 (SYNGR4) from Homo sapiens (Human).